Here is a 722-residue protein sequence, read N- to C-terminus: Polyribonucleotide nucleotidyltransferase (722 aa).

Residues Asp486 and Asp492 each contribute to the Mg(2+) site. One can recognise a KH domain in the interval 553 to 612 (PKIVQLQIDIDKISLVIGSTGKTVKAITDEFEVKVQIEQNGKIILFGDDDFKMQKAKERI). Positions 622–717 (GEIYEGTVKK…KFGKIDLEIV (96 aa)) constitute an S1 motif domain.

It belongs to the polyribonucleotide nucleotidyltransferase family. The cofactor is Mg(2+).

The protein localises to the cytoplasm. The enzyme catalyses RNA(n+1) + phosphate = RNA(n) + a ribonucleoside 5'-diphosphate. Functionally, involved in mRNA degradation. Catalyzes the phosphorolysis of single-stranded polyribonucleotides processively in the 3'- to 5'-direction. This chain is Polyribonucleotide nucleotidyltransferase, found in Borreliella burgdorferi (strain ZS7) (Borrelia burgdorferi).